A 146-amino-acid polypeptide reads, in one-letter code: Snake venom vascular endothelial growth factor toxin (146 aa).

A signal peptide spans 1 to 24 (MAAYLLAVAILFCIQGWPLGTVQG). Glutamine 25 carries the pyrrolidone carboxylic acid modification. 3 cysteine pairs are disulfide-bonded: cysteine 38-cysteine 80, cysteine 69-cysteine 115, and cysteine 73-cysteine 117. A disordered region spans residues 119-146 (PRSASGVNSRKHKRNPEEGEPRAKFPFV). Residues 133–146 (NPEEGEPRAKFPFV) are compositionally biased toward basic and acidic residues.

This sequence belongs to the PDGF/VEGF growth factor family. Snake venom VEGF subfamily. Homodimer; disulfide-linked. Interacts with VEGF receptor-1 (FLT1) with a high affinity, whereas it binds to VEGF receptor-2 (KDR) with a low affinity. Does not bind VEGF receptor-3 (FLT4). Expressed by the venom gland.

It localises to the secreted. In terms of biological role, snake venom VEGFs may contribute to venom dispersion and prey subjugation by inducing vascular permeability and hypotension. This protein induces vascular permeability probably through VEGF (VEGFR) signaling. This protein also induces a drastic hypotensive effect after intravenous injection. The hypotension is mediated by nitric oxide (NO), which is produced by VEGF-activated endothelium NO synthase. Also induces angiogenesis in vitro. Like other crotalid VEGFs, this protein interacts with VEGF receptor-1 (FLT1) with a high affinity, whereas it binds to VEGF receptor-2 (KDR) with a low affinity. The polypeptide is Snake venom vascular endothelial growth factor toxin (Bothrops insularis (Golden lancehead)).